The chain runs to 488 residues: Malonate-semialdehyde dehydrogenase 2 (488 aa).

5 residues coordinate NAD(+): Phe-155, Lys-179, Glu-182, Arg-183, and Ser-232. The active-site Nucleophile is the Cys-287. Glu-387 contacts NAD(+).

This sequence belongs to the aldehyde dehydrogenase family. IolA subfamily. In terms of assembly, homotetramer.

The catalysed reaction is 3-oxopropanoate + NAD(+) + CoA + H2O = hydrogencarbonate + acetyl-CoA + NADH + H(+). It catalyses the reaction 2-methyl-3-oxopropanoate + NAD(+) + CoA + H2O = propanoyl-CoA + hydrogencarbonate + NADH + H(+). It participates in polyol metabolism; myo-inositol degradation into acetyl-CoA; acetyl-CoA from myo-inositol: step 7/7. Functionally, catalyzes the oxidation of malonate semialdehyde (MSA) and methylmalonate semialdehyde (MMSA) into acetyl-CoA and propanoyl-CoA, respectively. Is involved in a myo-inositol catabolic pathway. Bicarbonate, and not CO2, is the end-product of the enzymatic reaction. This is Malonate-semialdehyde dehydrogenase 2 from Bacillus cereus (strain ZK / E33L).